Consider the following 179-residue polypeptide: Large ribosomal subunit protein uL5 (179 aa).

Belongs to the universal ribosomal protein uL5 family. Part of the 50S ribosomal subunit; part of the 5S rRNA/L5/L18/L25 subcomplex. Contacts the 5S rRNA and the P site tRNA. Forms a bridge to the 30S subunit in the 70S ribosome.

This is one of the proteins that bind and probably mediate the attachment of the 5S RNA into the large ribosomal subunit, where it forms part of the central protuberance. In the 70S ribosome it contacts protein S13 of the 30S subunit (bridge B1b), connecting the 2 subunits; this bridge is implicated in subunit movement. Contacts the P site tRNA; the 5S rRNA and some of its associated proteins might help stabilize positioning of ribosome-bound tRNAs. The chain is Large ribosomal subunit protein uL5 from Pectobacterium carotovorum subsp. carotovorum (strain PC1).